We begin with the raw amino-acid sequence, 200 residues long: Fibrillarin-like rRNA/tRNA 2'-O-methyltransferase (200 aa).

Residues 62 to 63, 78 to 79, 103 to 104, and 123 to 126 each bind S-adenosyl-L-methionine; these read TT, EF, DA, and DVAQ.

The protein belongs to the methyltransferase superfamily. Fibrillarin family. Interacts with nop5. Component of box C/D small ribonucleoprotein (sRNP) particles that contain rpl7ae, FlpA and nop5, plus a guide RNA.

Functionally, involved in pre-rRNA and tRNA processing. Utilizes the methyl donor S-adenosyl-L-methionine to catalyze the site-specific 2'-hydroxyl methylation of ribose moieties in rRNA and tRNA. Site specificity is provided by a guide RNA that base pairs with the substrate. Methylation occurs at a characteristic distance from the sequence involved in base pairing with the guide RNA. This chain is Fibrillarin-like rRNA/tRNA 2'-O-methyltransferase, found in Methanoculleus marisnigri (strain ATCC 35101 / DSM 1498 / JR1).